Consider the following 89-residue polypeptide: Small ribosomal subunit protein uS19 (89 aa).

Belongs to the universal ribosomal protein uS19 family.

In terms of biological role, protein S19 forms a complex with S13 that binds strongly to the 16S ribosomal RNA. The chain is Small ribosomal subunit protein uS19 from Stenotrophomonas maltophilia (strain R551-3).